The sequence spans 137 residues: Nucleoside diphosphate kinase (137 aa).

Positions 9, 57, 85, 91, 102, and 112 each coordinate ATP. Residue His115 is the Pros-phosphohistidine intermediate of the active site.

This sequence belongs to the NDK family. In terms of assembly, homotetramer. Mg(2+) serves as cofactor.

It localises to the cytoplasm. It carries out the reaction a 2'-deoxyribonucleoside 5'-diphosphate + ATP = a 2'-deoxyribonucleoside 5'-triphosphate + ADP. It catalyses the reaction a ribonucleoside 5'-diphosphate + ATP = a ribonucleoside 5'-triphosphate + ADP. In terms of biological role, major role in the synthesis of nucleoside triphosphates other than ATP. The ATP gamma phosphate is transferred to the NDP beta phosphate via a ping-pong mechanism, using a phosphorylated active-site intermediate. The chain is Nucleoside diphosphate kinase from Geotalea daltonii (strain DSM 22248 / JCM 15807 / FRC-32) (Geobacter daltonii).